Here is a 414-residue protein sequence, read N- to C-terminus: Gamma-glutamyl phosphate reductase (414 aa).

The protein belongs to the gamma-glutamyl phosphate reductase family.

The protein resides in the cytoplasm. It catalyses the reaction L-glutamate 5-semialdehyde + phosphate + NADP(+) = L-glutamyl 5-phosphate + NADPH + H(+). It participates in amino-acid biosynthesis; L-proline biosynthesis; L-glutamate 5-semialdehyde from L-glutamate: step 2/2. Catalyzes the NADPH-dependent reduction of L-glutamate 5-phosphate into L-glutamate 5-semialdehyde and phosphate. The product spontaneously undergoes cyclization to form 1-pyrroline-5-carboxylate. The polypeptide is Gamma-glutamyl phosphate reductase (Clostridium botulinum (strain Alaska E43 / Type E3)).